The sequence spans 198 residues: Nucleoid occlusion factor SlmA (198 aa).

Residues 9 to 70 (RNRREEILQA…SLIEFIEDSL (62 aa)) enclose the HTH tetR-type domain. Residues 33–52 (TTAKLAANVGVSEAALYRHF) constitute a DNA-binding region (H-T-H motif). The stretch at 113 to 144 (ALMFEQDRLQDRINQLFERIESQLRQVLREHK) forms a coiled coil.

Belongs to the nucleoid occlusion factor SlmA family. In terms of assembly, homodimer. Interacts with FtsZ.

It is found in the cytoplasm. The protein localises to the nucleoid. Functionally, required for nucleoid occlusion (NO) phenomenon, which prevents Z-ring formation and cell division over the nucleoid. Acts as a DNA-associated cell division inhibitor that binds simultaneously chromosomal DNA and FtsZ, and disrupts the assembly of FtsZ polymers. SlmA-DNA-binding sequences (SBS) are dispersed on non-Ter regions of the chromosome, preventing FtsZ polymerization at these regions. The polypeptide is Nucleoid occlusion factor SlmA (Pectobacterium carotovorum subsp. carotovorum (strain PC1)).